A 172-amino-acid chain; its full sequence is uncharacterized protein (172 aa).

This is an uncharacterized protein from Bacillus subtilis (strain 168).